Consider the following 456-residue polypeptide: NADH oxidase (456 aa).

An FAD-binding site is contributed by Asn-10. His-11 acts as the Proton acceptor in catalysis. 9 residues coordinate FAD: Ala-12, Asp-34, Gln-35, Cys-44, Val-81, Ala-110, Ser-113, Lys-143, and Tyr-170. Cys-44 serves as the catalytic Redox-active. At Cys-44 the chain carries Cysteine sulfinic acid (-SO2H). Residues Ile-171, Asp-190, Tyr-199, and Gly-254 each contribute to the NAD(+) site. FAD is bound at residue Asp-292. Position 308 (Ala-308) interacts with NAD(+). Residues Leu-309, Ala-310, and Ser-311 each coordinate FAD. Gly-339 is a binding site for NAD(+). Phe-436 contributes to the FAD binding site.

The cofactor is FAD.

It carries out the reaction 2 NADH + O2 + 2 H(+) = 2 NAD(+) + 2 H2O. In terms of biological role, catalyzes the four-electron reduction of molecular oxygen to water. This Streptococcus pyogenes serotype M6 (strain ATCC BAA-946 / MGAS10394) protein is NADH oxidase.